Consider the following 154-residue polypeptide: Histone H2B.5 (154 aa).

Residues 1 to 25 (MAPKAEKKPAAKKVAEEEPSEKAAP) show a composition bias toward basic and acidic residues. Positions 1–62 (MAPKAEKKPA…DKKGRKKAKK (62 aa)) are disordered. An N6-acetyllysine mark is found at lysine 7 and lysine 39. Lysine 150 participates in a covalent cross-link: Glycyl lysine isopeptide (Lys-Gly) (interchain with G-Cter in ubiquitin).

The protein belongs to the histone H2B family. As to quaternary structure, the nucleosome is a histone octamer containing two molecules each of H2A, H2B, H3 and H4 assembled in one H3-H4 heterotetramer and two H2A-H2B heterodimers. The octamer wraps approximately 147 bp of DNA. Can be acetylated to form H2BK6ac and H2BK33ac. Post-translationally, monoubiquitinated to form H2BK143ub1; may give a specific tag for epigenetic transcriptional activation.

The protein localises to the nucleus. It is found in the chromosome. Core component of nucleosome. Nucleosomes wrap and compact DNA into chromatin, limiting DNA accessibility to the cellular machineries which require DNA as a template. Histones thereby play a central role in transcription regulation, DNA repair, DNA replication and chromosomal stability. DNA accessibility is regulated via a complex set of post-translational modifications of histones, also called histone code, and nucleosome remodeling. This chain is Histone H2B.5, found in Zea mays (Maize).